Consider the following 122-residue polypeptide: Ribosome-binding factor A (122 aa).

Belongs to the RbfA family. As to quaternary structure, monomer. Binds 30S ribosomal subunits, but not 50S ribosomal subunits or 70S ribosomes.

Its subcellular location is the cytoplasm. In terms of biological role, one of several proteins that assist in the late maturation steps of the functional core of the 30S ribosomal subunit. Associates with free 30S ribosomal subunits (but not with 30S subunits that are part of 70S ribosomes or polysomes). Required for efficient processing of 16S rRNA. May interact with the 5'-terminal helix region of 16S rRNA. This Polynucleobacter necessarius subsp. necessarius (strain STIR1) protein is Ribosome-binding factor A.